The sequence spans 90 residues: Small ribosomal subunit protein uS15c (90 aa).

It belongs to the universal ribosomal protein uS15 family. Part of the 30S ribosomal subunit.

Its subcellular location is the plastid. It localises to the chloroplast. The polypeptide is Small ribosomal subunit protein uS15c (rps15) (Gossypium barbadense (Sea Island cotton)).